We begin with the raw amino-acid sequence, 145 residues long: 3-dehydroquinate dehydratase (145 aa).

Residue tyrosine 22 is the Proton acceptor of the active site. Positions 71, 77, and 84 each coordinate substrate. Histidine 97 (proton donor) is an active-site residue. Residues 98 to 99 (LS) and arginine 108 contribute to the substrate site.

It belongs to the type-II 3-dehydroquinase family. In terms of assembly, homododecamer.

It catalyses the reaction 3-dehydroquinate = 3-dehydroshikimate + H2O. Its pathway is metabolic intermediate biosynthesis; chorismate biosynthesis; chorismate from D-erythrose 4-phosphate and phosphoenolpyruvate: step 3/7. Its function is as follows. Catalyzes a trans-dehydration via an enolate intermediate. The polypeptide is 3-dehydroquinate dehydratase (Francisella tularensis subsp. mediasiatica (strain FSC147)).